Consider the following 617-residue polypeptide: Sphingosine kinase 2 (617 aa).

The tract at residues 1 to 140 (MAPPPLLPVA…LSGDQEITPE (140 aa)) is required for binding to sulfatide and phosphoinositides and for membrane localization. The short motif at 87-95 (RGRRGGRRR) is the Nuclear localization signal element. One can recognise a DAGKc domain in the interval 143–290 (PRKPRLLILV…LDLLSVTLAS (148 aa)). Residues 153–155 (NPF) and 185–189 (TERQN) each bind ATP. 210-213 (SGDG) is a substrate binding site. Asp212 serves as the catalytic Proton donor/acceptor. ATP-binding positions include Glu217 and 242 to 244 (GSG). Asp309 serves as a coordination point for substrate. Arg316 and Arg322 together coordinate ATP. Phosphoserine occurs at positions 358 and 364. The interval 371–472 (APAPAATHSP…GFLPPTHSAP (102 aa)) is disordered. Position 377 is a phosphothreonine (Thr377). The Nuclear export signal signature appears at 381 to 390 (LHRSVSDLPL). A phosphoserine mark is found at Ser384 and Ser386. Gly residues predominate over residues 412 to 426 (NGGGPELTGDWGGAG). Thr578 is modified (phosphothreonine). 586 to 588 (DGE) contacts ATP.

In terms of assembly, interacts with histone H3. Interacts with HDAC1, HDAC2, MBD2 and SIN3A. Interacts with EEF1A1; the interaction enhances SPHK2 kinase activity. Interacts with PHB2. The cofactor is Mg(2+). Post-translationally, phosphorylated by PKD on Ser-384 and Ser-386 upon PMA treatment. Phosphorylation induces export from the nucleus to the cytoplasm. Phosphorylated by MAPK1 and MAPK2 at Thr-578, phosphorylation is induced by agonists such as EGF and PMA and increases kinase activity. Cleaved by CASP1 in apoptotic cells. The truncated form is released from cells. Expressed in heart, brain, liver, kidney and testis. Expressed by mast cells (at protein level). In the substantia nigra, expressed by dopaminergic neurons (at protein level).

It is found in the lysosome membrane. The protein localises to the cytoplasm. Its subcellular location is the cell membrane. The protein resides in the endoplasmic reticulum. It localises to the nucleus. It is found in the mitochondrion inner membrane. It catalyses the reaction a sphingoid base + ATP = a sphingoid 1-phosphate + ADP + H(+). It carries out the reaction sphing-4-enine + ATP = sphing-4-enine 1-phosphate + ADP + H(+). The catalysed reaction is sphinganine + ATP = sphinganine 1-phosphate + ADP + H(+). The enzyme catalyses (4R)-hydroxysphinganine + ATP = (4R)-hydroxysphinganine 1-phosphate + ADP + H(+). Its function is as follows. Catalyzes the phosphorylation of sphingosine to form sphingosine-1-phosphate (SPP), a lipid mediator with both intra- and extracellular functions. Also acts on D-erythro-dihydrosphingosine, D-erythro-sphingosine and L-threo-dihydrosphingosine. Binds phosphoinositides. In contrast to prosurvival SPHK1, has a positive effect on intracellular ceramide levels, inhibits cells growth and enhances apoptosis. In mitochondria, is important for cytochrome-c oxidase assembly and mitochondrial respiration. The SPP produced in mitochondria binds PHB2 and modulates the regulation via PHB2 of complex IV assembly and respiration. In nucleus, plays a role in epigenetic regulation of gene expression. Interacts with HDAC1 and HDAC2 and, through SPP production, inhibits their enzymatic activity, preventing the removal of acetyl groups from lysine residues with histones. Up-regulates acetylation of histone H3-K9, histone H4-K5 and histone H2B-K12. In nucleus, may have an inhibitory effect on DNA synthesis and cell cycle. In mast cells, is the main regulator of SPP production which mediates calcium influx, NF-kappa-B activation, cytokine production, such as TNF and IL6, and degranulation of mast cells. In dopaminergic neurons, is involved in promoting mitochondrial functions regulating ATP and ROS levels. Also involved in the regulation of glucose and lipid metabolism. The polypeptide is Sphingosine kinase 2 (Mus musculus (Mouse)).